A 505-amino-acid chain; its full sequence is Bifunctional NAD(P)H-hydrate repair enzyme Nnr (505 aa).

The segment at 1 to 219 (MKPTFPAIVT…SVVIETALAS (219 aa)) is NAD(P)H-hydrate epimerase. The region spanning 14 to 214 (MQAIEGAMFN…PFDIPSVVIE (201 aa)) is the YjeF N-terminal domain. Residues 63–67 (HNGGD) form an NADPHX 1; for epimerase activity region. Asn64 and Asp124 together coordinate K(+). The NADPHX 1; for epimerase activity stretch occupies residues 128 to 134 (GFGLERE). Asp157 contributes to the (6S)-NADPHX binding site. Ser160 contributes to the K(+) binding site. Residues 226–500 (LDDSCWQALP…AHLLPTLRRA (275 aa)) enclose the YjeF C-terminal domain. Positions 227–505 (DDSCWQALPL…TLRRALAARV (279 aa)) are ADP-dependent (S)-NAD(P)H-hydrate dehydratase. Gly330 provides a ligand contact to (6S)-NADPHX. The segment at 376-382 (HYGEFRR) is NADPHX 2; for dehydratase activity. Residues 412 to 416 (KGART) and 432 to 441 (TPALARGGSG) each bind ADP. Asp442 contributes to the (6S)-NADPHX binding site.

The protein in the N-terminal section; belongs to the NnrE/AIBP family. It in the C-terminal section; belongs to the NnrD/CARKD family. K(+) is required as a cofactor.

The enzyme catalyses (6S)-NADHX + ADP = AMP + phosphate + NADH + H(+). It catalyses the reaction (6S)-NADPHX + ADP = AMP + phosphate + NADPH + H(+). The catalysed reaction is (6R)-NADHX = (6S)-NADHX. It carries out the reaction (6R)-NADPHX = (6S)-NADPHX. Functionally, bifunctional enzyme that catalyzes the epimerization of the S- and R-forms of NAD(P)HX and the dehydration of the S-form of NAD(P)HX at the expense of ADP, which is converted to AMP. This allows the repair of both epimers of NAD(P)HX, a damaged form of NAD(P)H that is a result of enzymatic or heat-dependent hydration. This chain is Bifunctional NAD(P)H-hydrate repair enzyme Nnr (nnr), found in Thermosynechococcus vestitus (strain NIES-2133 / IAM M-273 / BP-1).